Here is a 255-residue protein sequence, read N- to C-terminus: Endonuclease V (255 aa).

Residues D42 and D110 each coordinate Mg(2+).

Belongs to the endonuclease V family. Mg(2+) serves as cofactor.

Its subcellular location is the cytoplasm. The enzyme catalyses Endonucleolytic cleavage at apurinic or apyrimidinic sites to products with a 5'-phosphate.. Functionally, DNA repair enzyme involved in the repair of deaminated bases. Selectively cleaves double-stranded DNA at the second phosphodiester bond 3' to a deoxyinosine leaving behind the intact lesion on the nicked DNA. This is Endonuclease V from Aeropyrum pernix (strain ATCC 700893 / DSM 11879 / JCM 9820 / NBRC 100138 / K1).